Consider the following 252-residue polypeptide: 14-3-3-like protein GF14 omicron (252 aa).

A phosphoserine mark is found at Ser-65 and Ser-188.

Belongs to the 14-3-3 family.

Its subcellular location is the nucleus. The protein resides in the cytoplasm. Its function is as follows. Is associated with a DNA binding complex that binds to the G box, a well-characterized cis-acting DNA regulatory element found in plant genes. The sequence is that of 14-3-3-like protein GF14 omicron (GRF11) from Arabidopsis thaliana (Mouse-ear cress).